A 209-amino-acid chain; its full sequence is Glycerol-3-phosphate acyltransferase (209 aa).

The next 5 helical transmembrane spans lie at 7-27 (IELAGIAGAYFLGSLSSAIIV), 85-105 (AIILVGFASFIGHLYPIFFGF), 117-137 (VMFGLSLPIGAAVAGTWLFVA), 142-162 (ISSLSALIATALAPLYIYLLA), and 166-183 (MAWVSVTAIMTLILFWRH).

It belongs to the PlsY family. In terms of assembly, probably interacts with PlsX.

The protein resides in the cell inner membrane. The catalysed reaction is an acyl phosphate + sn-glycerol 3-phosphate = a 1-acyl-sn-glycero-3-phosphate + phosphate. It functions in the pathway lipid metabolism; phospholipid metabolism. Catalyzes the transfer of an acyl group from acyl-phosphate (acyl-PO(4)) to glycerol-3-phosphate (G3P) to form lysophosphatidic acid (LPA). This enzyme utilizes acyl-phosphate as fatty acyl donor, but not acyl-CoA or acyl-ACP. The sequence is that of Glycerol-3-phosphate acyltransferase from Hydrogenovibrio crunogenus (strain DSM 25203 / XCL-2) (Thiomicrospira crunogena).